The following is a 413-amino-acid chain: Oxidoreductase vrtI (413 aa).

Positions 235–341 constitute a Fe2OG dioxygenase domain; sequence DAESLTTLSM…RYSIAYFLRA (107 aa). Fe cation is bound by residues His-262, Asp-264, and His-319. Arg-332 lines the 2-oxoglutarate pocket.

It belongs to the iron/ascorbate-dependent oxidoreductase family.

Its pathway is secondary metabolite biosynthesis; terpenoid biosynthesis. Its function is as follows. Oxidoreductase; part of the gene cluster that mediates the biosynthesis of viridicatumtoxin, a tetracycline-like fungal meroterpenoid with a unique, fused spirobicyclic ring system. The first step of the pathway is the production of the malonamoyl-CoA starter unit for the polyketide synthase vrtA. The aldolase vrtJ may be involved in the synthesis of the malonamate substrate for malonamoyl-CoA synthetase vrtB. The polyketide synthase vrtA then may utilize the malonamoyl-CoA starter unit, followed by sequential condensation of eight malonyl-CoA units to form the polyketide backbone. The cyclization of the last ring could be mediated by the lactamase-like protein vrtG. The proposed post-PKS tailoring steps are a hydroxylation at C5 catalyzed the cytochrome P450 monooxygenase vrtE, a hydroxylation at C12a catalyzed by VrtH and/or VrtI, and an O-methylation by the O-methyltransferase vrtF. VrtC is then proposed to catalyze the transfer of a geranyl group synthesized by vrtD to the aromatic C ring of the tetracyclic polyketide intermediate of viridicatumtoxin to yield previridicatumtoxin. Finally, the cytochrome P450 monooxygenase vrtK catalyzes the spirocyclization of the geranyl moiety of previridicatumtoxin to afford viridicatumtoxin. This Penicillium aethiopicum protein is Oxidoreductase vrtI.